A 282-amino-acid polypeptide reads, in one-letter code: Shikimate dehydrogenase (NADP(+)) (282 aa).

Shikimate contacts are provided by residues 18–20 (SRS) and Thr-65. The active-site Proton acceptor is the Lys-69. Glu-81 provides a ligand contact to NADP(+). Shikimate is bound by residues Asn-90 and Asp-105. NADP(+) contacts are provided by residues 130–134 (GAGGA), 154–159 (NRTPAR), and Met-222. Residue Tyr-224 participates in shikimate binding. Residue Gly-245 coordinates NADP(+).

The protein belongs to the shikimate dehydrogenase family. As to quaternary structure, homodimer.

The catalysed reaction is shikimate + NADP(+) = 3-dehydroshikimate + NADPH + H(+). The protein operates within metabolic intermediate biosynthesis; chorismate biosynthesis; chorismate from D-erythrose 4-phosphate and phosphoenolpyruvate: step 4/7. Functionally, involved in the biosynthesis of the chorismate, which leads to the biosynthesis of aromatic amino acids. Catalyzes the reversible NADPH linked reduction of 3-dehydroshikimate (DHSA) to yield shikimate (SA). The chain is Shikimate dehydrogenase (NADP(+)) from Acidovorax sp. (strain JS42).